The primary structure comprises 277 residues: Orotidine 5'-phosphate decarboxylase (277 aa).

Catalysis depends on K93, which acts as the Proton donor.

It belongs to the OMP decarboxylase family. Type 2 subfamily.

The catalysed reaction is orotidine 5'-phosphate + H(+) = UMP + CO2. It participates in pyrimidine metabolism; UMP biosynthesis via de novo pathway; UMP from orotate: step 2/2. The chain is Orotidine 5'-phosphate decarboxylase from Haloarcula marismortui (strain ATCC 43049 / DSM 3752 / JCM 8966 / VKM B-1809) (Halobacterium marismortui).